Reading from the N-terminus, the 232-residue chain is Ion-translocating oxidoreductase complex subunit E (232 aa).

5 consecutive transmembrane segments (helical) span residues Leu-39 to Val-59, Ile-69 to Ala-89, Gly-93 to Gly-113, Ala-128 to Thr-148, and Ser-182 to Leu-202.

The protein belongs to the NqrDE/RnfAE family. In terms of assembly, the complex is composed of six subunits: RnfA, RnfB, RnfC, RnfD, RnfE and RnfG.

It localises to the cell inner membrane. Part of a membrane-bound complex that couples electron transfer with translocation of ions across the membrane. In Shewanella oneidensis (strain ATCC 700550 / JCM 31522 / CIP 106686 / LMG 19005 / NCIMB 14063 / MR-1), this protein is Ion-translocating oxidoreductase complex subunit E.